Consider the following 353-residue polypeptide: Putative glycosyltransferase TagX (353 aa).

It belongs to the glycosyltransferase 2 family.

The sequence is that of Putative glycosyltransferase TagX (tagX) from Staphylococcus aureus (strain Mu50 / ATCC 700699).